A 65-amino-acid polypeptide reads, in one-letter code: Myosin-11 (65 aa).

The 65-residue stretch at 1-65 folds into the Myosin motor domain; sequence RSGKLDAFLV…NWQWWRLFTK (65 aa).

It belongs to the TRAFAC class myosin-kinesin ATPase superfamily. Myosin family. Muscle myosin is a hexameric protein that consists of 2 heavy chain subunits (MHC), 2 alkali light chain subunits (MLC) and 2 regulatory light chain subunits (MLC-2).

It localises to the melanosome. The protein resides in the cytoplasm. The protein localises to the myofibril. In terms of biological role, muscle contraction. In Sus scrofa (Pig), this protein is Myosin-11 (MYH11).